We begin with the raw amino-acid sequence, 304 residues long: Protein translocase subunit SecF (304 aa).

A run of 6 helical transmembrane segments spans residues 20-40 (AKLF…LIFT), 143-163 (AMMA…IRFE), 164-184 (LIFA…TLGF), 195-215 (TVVA…IVVF), 244-266 (LSRT…IFGG), and 276-298 (LVIG…VYLI).

Belongs to the SecD/SecF family. SecF subfamily. In terms of assembly, forms a complex with SecD. Part of the essential Sec protein translocation apparatus which comprises SecA, SecYEG and auxiliary proteins SecDF. Other proteins may also be involved.

The protein localises to the cell inner membrane. Its function is as follows. Part of the Sec protein translocase complex. Interacts with the SecYEG preprotein conducting channel. SecDF uses the proton motive force (PMF) to complete protein translocation after the ATP-dependent function of SecA. The sequence is that of Protein translocase subunit SecF from Calditerrivibrio nitroreducens (strain DSM 19672 / NBRC 101217 / Yu37-1).